The sequence spans 594 residues: Putative phospholipase B-like 2 (594 aa).

The signal sequence occupies residues 1-46 (MAAPVDGSSGGWAARALRRALALTSLTTLALLASLTGLLLSGPAGA). Asparagine 93 and asparagine 115 each carry an N-linked (GlcNAc...) asparagine glycan. Cysteine 147 and cysteine 157 are joined by a disulfide. N-linked (GlcNAc...) asparagine glycosylation is found at asparagine 236 and asparagine 441. A disulfide bond links cysteine 497 and cysteine 500. An N-linked (GlcNAc...) asparagine glycan is attached at asparagine 520.

Belongs to the phospholipase B-like family. As to quaternary structure, interacts with IGF2R. Post-translationally, the p76 protein is synthesized as a 76 kDa precursor which is then processed into a N-terminal 28 kDa form and a C-terminal 40 kDa form. The C-terminal peptide is further processed into a 15 kDa form. In terms of processing, glycosylated; contains mannose 6-phosphate sugars. Present at highest levels in spleen, lung and brain (at protein level).

The protein localises to the lysosome lumen. Its function is as follows. Putative phospholipase. The polypeptide is Putative phospholipase B-like 2 (Plbd2) (Mus musculus (Mouse)).